The following is a 322-amino-acid chain: Acetyl-coenzyme A carboxylase carboxyl transferase subunit alpha (322 aa).

The region spanning A30–L293 is the CoA carboxyltransferase C-terminal domain.

The protein belongs to the AccA family. Acetyl-CoA carboxylase is a heterohexamer composed of biotin carboxyl carrier protein (AccB), biotin carboxylase (AccC) and two subunits each of ACCase subunit alpha (AccA) and ACCase subunit beta (AccD).

The protein localises to the cytoplasm. It carries out the reaction N(6)-carboxybiotinyl-L-lysyl-[protein] + acetyl-CoA = N(6)-biotinyl-L-lysyl-[protein] + malonyl-CoA. The protein operates within lipid metabolism; malonyl-CoA biosynthesis; malonyl-CoA from acetyl-CoA: step 1/1. Its function is as follows. Component of the acetyl coenzyme A carboxylase (ACC) complex. First, biotin carboxylase catalyzes the carboxylation of biotin on its carrier protein (BCCP) and then the CO(2) group is transferred by the carboxyltransferase to acetyl-CoA to form malonyl-CoA. This chain is Acetyl-coenzyme A carboxylase carboxyl transferase subunit alpha, found in Nitrosospira multiformis (strain ATCC 25196 / NCIMB 11849 / C 71).